A 252-amino-acid polypeptide reads, in one-letter code: Sororin (252 aa).

Disordered stretches follow at residues 1-48 and 72-142; these read MSGR…WPKT and AVQS…SKKV. Residues S21, S33, S35, S75, S79, and S83 each carry the phosphoserine modification. Over residues 86–104 the composition is skewed to basic and acidic residues; that stretch reads LEKENEPPGRELTKEDLFK. Residues 88–90 carry the KEN box motif; it reads KEN. Phosphothreonine is present on T98. Over residues 105–116 the composition is skewed to low complexity; sequence THSVPATPTSTP. Phosphoserine is present on S107. Residues T111 and T115 each carry the phosphothreonine modification. The span at 124–140 shows a compositional bias: basic and acidic residues; the sequence is SSSKEGELDARDLEMSK. S154 is subject to Phosphoserine. A Phosphothreonine modification is found at T159. Residues 166-168 carry the FGF motif motif; sequence FGF. The tract at residues 199–222 is disordered; it reads WAPDMTLPGISPPPEKQKRKKKKM. S209 is subject to Phosphoserine. Residues 230-252 are C-terminal Sororin domain; it reads LDEWAAAMNAEFEAAEQFDLLVE.

It belongs to the sororin family. In terms of assembly, interacts with the APC/C complex. Interacts with the chromatin-bound cohesin complex; the interaction is indirect, occurs after DNA replication and requires acetylation of the cohesin component SMC3. Interacts (via the FGF motif) with PDS5A and PDS5B; the interaction is direct and prevents the interaction of PDS5A with WAPL. Post-translationally, phosphorylated. Phosphorylation, as cells enter mitosis, disrupts the interaction with PDS5A and relieves the inhibition of WAPL by CDCA5. Ubiquitinated by the APC/C complex in G1, leading to its degradation.

The protein localises to the nucleus. The protein resides in the chromosome. Its subcellular location is the cytoplasm. Functionally, regulator of sister chromatid cohesion in mitosis stabilizing cohesin complex association with chromatin. May antagonize the action of WAPL which stimulates cohesin dissociation from chromatin. Cohesion ensures that chromosome partitioning is accurate in both meiotic and mitotic cells and plays an important role in DNA repair. Required for efficient DNA double-stranded break repair. This Homo sapiens (Human) protein is Sororin (CDCA5).